Reading from the N-terminus, the 150-residue chain is MKIVLQKVSQASVVVDSKVISSIKHGYMLLVGISIDDSMAEIDKLSKKVLSLRIFEDESRNLWKKNIKEANGEILSVSQFTLMAKTKKGTKPDFHLAQKGHIAKELYEEFLKLLRSDLGEEKVKDGEFGAMMSCSLTNEGPVTIILDSDQ.

The Gly-cisPro motif, important for rejection of L-amino acids motif lies at 140-141 (GP).

It belongs to the DTD family. As to quaternary structure, homodimer.

It localises to the cytoplasm. It catalyses the reaction glycyl-tRNA(Ala) + H2O = tRNA(Ala) + glycine + H(+). The enzyme catalyses a D-aminoacyl-tRNA + H2O = a tRNA + a D-alpha-amino acid + H(+). The catalysed reaction is D-tyrosyl-tRNA(Tyr) + H2O = D-tyrosine + tRNA(Tyr). An aminoacyl-tRNA editing enzyme that deacylates mischarged D-aminoacyl-tRNAs. Hydrolyzes D-tyrosyl-tRNA(Tyr) into D-tyrosine and free tRNA(Tyr). May also deacylate mischarged D-leucyl-tRNA(Leu). Also deacylates mischarged glycyl-tRNA(Ala), protecting cells against glycine mischarging by AlaRS. Acts via tRNA-based rather than protein-based catalysis; rejects L-amino acids rather than detecting D-amino acids in the active site. By recycling D-aminoacyl-tRNA to D-amino acids and free tRNA molecules, this enzyme counteracts the toxicity associated with the formation of D-aminoacyl-tRNA entities in vivo and helps enforce protein L-homochirality. This is D-aminoacyl-tRNA deacylase from Saccharomyces cerevisiae (strain ATCC 204508 / S288c) (Baker's yeast).